The chain runs to 2096 residues: HEAT repeat-containing protein 1 homolog (2096 aa).

Residues 2058–2096 (TVPFIAELLEDEHQRVEKNTRTGVQELETILGESVQKYL) form an HEAT repeat.

It belongs to the HEATR1/UTP10 family. In terms of assembly, part of the small subunit (SSU) processome, composed of more than 70 proteins and the RNA chaperone small nucleolar RNA (snoRNA) U3. Interacts with MYC; the interaction is required for localization of MYC to the nucleolus.

It is found in the nucleus. It localises to the nucleolus. Ribosome biogenesis factor; required for recruitment of Myc to nucleoli. Involved in nucleolar processing of pre-18S ribosomal RNA. Required for optimal pre-ribosomal RNA transcription by RNA polymerase I. Part of the small subunit (SSU) processome, first precursor of the small eukaryotic ribosomal subunit. During the assembly of the SSU processome in the nucleolus, many ribosome biogenesis factors, an RNA chaperone and ribosomal proteins associate with the nascent pre-rRNA and work in concert to generate RNA folding, modifications, rearrangements and cleavage as well as targeted degradation of pre-ribosomal RNA by the RNA exosome. Involved in neuronal-lineage cell proliferation during larval development. The sequence is that of HEAT repeat-containing protein 1 homolog from Drosophila melanogaster (Fruit fly).